The chain runs to 111 residues: Cytochrome c (111 aa).

N-acetylalanine is present on Ala1. Residues Cys22, Cys25, and His26 each contribute to the heme c site. Residue Lys80 is modified to N6,N6,N6-trimethyllysine. Met88 is a heme c binding site. Residue Lys94 is modified to N6,N6,N6-trimethyllysine.

This sequence belongs to the cytochrome c family. Binds 1 heme c group covalently per subunit.

It is found in the mitochondrion intermembrane space. Functionally, electron carrier protein. The oxidized form of the cytochrome c heme group can accept an electron from the heme group of the cytochrome c1 subunit of cytochrome reductase. Cytochrome c then transfers this electron to the cytochrome oxidase complex, the final protein carrier in the mitochondrial electron-transport chain. The protein is Cytochrome c of Cucurbita maxima (Pumpkin).